A 225-amino-acid chain; its full sequence is Large ribosomal subunit protein uL4 (225 aa).

The interval 46–102 (KRQGTHATKGRGEVRGGGRKPFRQKGTGRARQGSIRAPHFTGGGTVHGPQPRDYSQR) is disordered. Over residues 62–73 (GGRKPFRQKGTG) the composition is skewed to basic residues.

The protein belongs to the universal ribosomal protein uL4 family. Part of the 50S ribosomal subunit.

Its function is as follows. One of the primary rRNA binding proteins, this protein initially binds near the 5'-end of the 23S rRNA. It is important during the early stages of 50S assembly. It makes multiple contacts with different domains of the 23S rRNA in the assembled 50S subunit and ribosome. In terms of biological role, forms part of the polypeptide exit tunnel. The polypeptide is Large ribosomal subunit protein uL4 (Corynebacterium urealyticum (strain ATCC 43042 / DSM 7109)).